The chain runs to 332 residues: MMKTVLLLVVLVGVAYCDDDGWDMGNFFQQYHQWQQQISSSSSSSSSSGGGGSSGGGASGGGGGGGSSGGGGASGGGGGGSSGGGGLTKVVLKAGGGGRGGGGIVKSVGGGGGGVTKLVAAGGASGGGSVSGGGGGGLALLAGGSAAGGGRSGVVTVSKQPIIINRQVTHVNTGGSGGGVGGGFGGGRGGFGYGLYGGHHHYNPCGYGQVYSYYYGCQSIYKQPARQVYHQPIYQPVQTVYQPVQYYQQPYQYQHSYGQASHAYQPQTTKYISYSYPQYSSQGSYPIVAGGSAGGFASARSGGFGLSSGGIGGHSSYPLSVFKHAKGEKYKL.

Residues 1–17 (MMKTVLLLVVLVGVAYC) form the signal peptide. The interval 39–81 (SSSSSSSSSSGGGGSSGGGASGGGGGGGSSGGGGASGGGGGGS) is disordered. Over residues 48–81 (SGGGGSSGGGASGGGGGGGSSGGGGASGGGGGGS) the composition is skewed to gly residues.

Prismatic layer of shell (at protein level). Expressed primarily in the mantle with highest level in the mantle edge and lower level in the mantle pallium.

The protein localises to the secreted. This is Serine, glycine, tyrosine and glutamine-rich protein from Margaritifera margaritifera (Freshwater pearl mussel).